Reading from the N-terminus, the 302-residue chain is Homoserine kinase (302 aa).

Residue 90 to 100 (KPGSGLGSSSA) participates in ATP binding.

This sequence belongs to the GHMP kinase family. Homoserine kinase subfamily.

The protein resides in the cytoplasm. The catalysed reaction is L-homoserine + ATP = O-phospho-L-homoserine + ADP + H(+). It participates in amino-acid biosynthesis; L-threonine biosynthesis; L-threonine from L-aspartate: step 4/5. Functionally, catalyzes the ATP-dependent phosphorylation of L-homoserine to L-homoserine phosphate. This is Homoserine kinase from Methanococcus vannielii (strain ATCC 35089 / DSM 1224 / JCM 13029 / OCM 148 / SB).